Reading from the N-terminus, the 230-residue chain is Cytidylate kinase (230 aa).

12-20 (GPSGAGKGT) lines the ATP pocket.

This sequence belongs to the cytidylate kinase family. Type 1 subfamily.

Its subcellular location is the cytoplasm. The catalysed reaction is CMP + ATP = CDP + ADP. It carries out the reaction dCMP + ATP = dCDP + ADP. The chain is Cytidylate kinase from Shewanella sediminis (strain HAW-EB3).